A 65-amino-acid polypeptide reads, in one-letter code: Hirudin-2' (65 aa).

Residues 1–3 (ITY) form an interaction with thrombin active site region. Disulfide bonds link Cys6/Cys14, Cys16/Cys28, and Cys22/Cys39. Residues 39 to 65 (CVTGEGTPKPQSHNDGDFEEIPEEYLQ) are disordered. The O-linked (GalNAc...) threonine glycan is linked to Thr45. Residues 55–65 (DFEEIPEEYLQ) are interaction with fibrinogen-binding exosite of thrombin. Over residues 55 to 65 (DFEEIPEEYLQ) the composition is skewed to acidic residues. The residue at position 63 (Tyr63) is a Sulfotyrosine.

This sequence belongs to the protease inhibitor I14 (hirudin) family.

It is found in the secreted. Its function is as follows. Hirudin is a potent thrombin-specific protease inhibitor. It forms a stable non-covalent complex with alpha-thrombin, thereby abolishing its ability to cleave fibrinogen. The polypeptide is Hirudin-2' (Hirudo medicinalis (Medicinal leech)).